Consider the following 330-residue polypeptide: Mitochondrial glycine transporter (330 aa).

3 Solcar repeats span residues 11 to 94, 122 to 206, and 234 to 318; these read SSSY…LRQN, LSNL…LKKR, and TSAS…LIRR. 6 helical membrane-spanning segments follow: residues 17-42, 69-95, 128-153, 181-204, 238-264, and 293-311; these read FTAG…TRLQ, GTVP…RQNV, LTTG…VRYE, GFGA…EQLK, INFG…KTRI, and GLGL…AWTI.

The protein belongs to the mitochondrial carrier (TC 2.A.29) family. SLC25A38 subfamily.

The protein localises to the mitochondrion inner membrane. It carries out the reaction glycine(in) = glycine(out). Functionally, mitochondrial glycine transporter that imports glycine into the mitochondrial matrix. Plays an important role in providing glycine for the first enzymatic step in heme biosynthesis, the condensation of glycine with succinyl-CoA to produce 5-aminolevulinate (ALA) in the mitochondrial matrix. The chain is Mitochondrial glycine transporter from Sclerotinia sclerotiorum (strain ATCC 18683 / 1980 / Ss-1) (White mold).